Reading from the N-terminus, the 182-residue chain is Ribosome maturation factor RimM (182 aa).

In terms of domain architecture, PRC barrel spans 101–174 (QDEYFIHQLY…QIVVRLLPGL (74 aa)).

The protein belongs to the RimM family. Binds ribosomal protein uS19.

It localises to the cytoplasm. In terms of biological role, an accessory protein needed during the final step in the assembly of 30S ribosomal subunit, possibly for assembly of the head region. Essential for efficient processing of 16S rRNA. May be needed both before and after RbfA during the maturation of 16S rRNA. It has affinity for free ribosomal 30S subunits but not for 70S ribosomes. The protein is Ribosome maturation factor RimM of Roseiflexus sp. (strain RS-1).